The sequence spans 230 residues: MRFQTTLVPARLIRRYKRFLADCQLEDGREVTAHCANPGSMMGLADPGTKIWLEPNDDPKKKLKFGWRLVDHENGHFTGVDTSVPNRALKTALERRAIPSLAAYETVRPEVKYGQNSRIDFLLSGPGLADAYVEVKSVTLCREPGLAEFPDSVTARGAKHLAELAAMAGLGHRAIMLYLVQRTDCDRFTLAADIDPAYARAFETARAQGVEKLILTTHISPQGVEIADML.

Belongs to the SfsA family.

This is Sugar fermentation stimulation protein homolog from Ruegeria pomeroyi (strain ATCC 700808 / DSM 15171 / DSS-3) (Silicibacter pomeroyi).